We begin with the raw amino-acid sequence, 230 residues long: 7-cyano-7-deazaguanine synthase (230 aa).

Position 9–19 (9–19 (ISGGLDSTTCL)) interacts with ATP. 4 residues coordinate Zn(2+): Cys-192, Cys-202, Cys-205, and Cys-208.

Belongs to the QueC family. It depends on Zn(2+) as a cofactor.

The catalysed reaction is 7-carboxy-7-deazaguanine + NH4(+) + ATP = 7-cyano-7-deazaguanine + ADP + phosphate + H2O + H(+). Its pathway is purine metabolism; 7-cyano-7-deazaguanine biosynthesis. Catalyzes the ATP-dependent conversion of 7-carboxy-7-deazaguanine (CDG) to 7-cyano-7-deazaguanine (preQ(0)). The polypeptide is 7-cyano-7-deazaguanine synthase (Myxococcus xanthus (strain DK1622)).